The primary structure comprises 428 residues: C4-dicarboxylate transport protein (428 aa).

9 helical membrane-spanning segments follow: residues 4 to 24, 44 to 64, 76 to 96, 142 to 162, 184 to 204, 222 to 242, 289 to 309, 326 to 346, and 352 to 372; these read SLFK…ILLG, LIKM…IAGM, VALL…LIIV, IGAF…MFGF, VIFG…FGAM, LIVC…GSIA, VVGL…SIYL, IFHQ…AAGV, and IVLA…LALI.

The protein belongs to the dicarboxylate/amino acid:cation symporter (DAACS) (TC 2.A.23) family.

It localises to the cell inner membrane. Responsible for the transport of dicarboxylates such as succinate, fumarate, and malate from the periplasm across the membrane. This is C4-dicarboxylate transport protein from Citrobacter koseri (strain ATCC BAA-895 / CDC 4225-83 / SGSC4696).